We begin with the raw amino-acid sequence, 210 residues long: MIKQPALVQEQYACVYAWLALLFFREVDDEGLIQLQSAEIADWLALLKRQPALAASVALLEQKIAALSLRQDAQLELAADFCGLFLMTDKKSALPYASQYPQQEPGMIKHLLLEAGMEVNDDFKEPADHLAIYLELLSHLHFSLGESFQQRRMNKLRQKTLSSLLEWLPEFTNNCLKHDPYGFYAALSQLLLAIVRFDDGKEDLSIVAAE.

The protein belongs to the TorD/DmsD family. TorD subfamily.

Its subcellular location is the cytoplasm. In terms of biological role, involved in the biogenesis of TorA. Acts on TorA before the insertion of the molybdenum cofactor and, as a result, probably favors a conformation of the apoenzyme that is competent for acquiring the cofactor. This is Chaperone protein TorD from Salmonella paratyphi B (strain ATCC BAA-1250 / SPB7).